We begin with the raw amino-acid sequence, 396 residues long: Phosphopentomutase (396 aa).

Mn(2+)-binding residues include aspartate 13, aspartate 288, histidine 293, aspartate 329, histidine 330, and histidine 341.

It belongs to the phosphopentomutase family. It depends on Mn(2+) as a cofactor.

It is found in the cytoplasm. It catalyses the reaction 2-deoxy-alpha-D-ribose 1-phosphate = 2-deoxy-D-ribose 5-phosphate. It carries out the reaction alpha-D-ribose 1-phosphate = D-ribose 5-phosphate. It participates in carbohydrate degradation; 2-deoxy-D-ribose 1-phosphate degradation; D-glyceraldehyde 3-phosphate and acetaldehyde from 2-deoxy-alpha-D-ribose 1-phosphate: step 1/2. In terms of biological role, isomerase that catalyzes the conversion of deoxy-ribose 1-phosphate (dRib-1-P) and ribose 1-phosphate (Rib-1-P) to deoxy-ribose 5-phosphate (dRib-5-P) and ribose 5-phosphate (Rib-5-P), respectively. The chain is Phosphopentomutase from Clostridium botulinum (strain Alaska E43 / Type E3).